A 200-amino-acid chain; its full sequence is Pyridoxal 5'-phosphate synthase subunit PdxT (200 aa).

52–54 (GES) serves as a coordination point for L-glutamine. Cys84 (nucleophile) is an active-site residue. Residues Arg116 and 145 to 146 (IR) contribute to the L-glutamine site. Active-site charge relay system residues include His181 and Glu183.

Belongs to the glutaminase PdxT/SNO family. In terms of assembly, in the presence of PdxS, forms a dodecamer of heterodimers. Only shows activity in the heterodimer.

It carries out the reaction aldehydo-D-ribose 5-phosphate + D-glyceraldehyde 3-phosphate + L-glutamine = pyridoxal 5'-phosphate + L-glutamate + phosphate + 3 H2O + H(+). The enzyme catalyses L-glutamine + H2O = L-glutamate + NH4(+). It functions in the pathway cofactor biosynthesis; pyridoxal 5'-phosphate biosynthesis. Catalyzes the hydrolysis of glutamine to glutamate and ammonia as part of the biosynthesis of pyridoxal 5'-phosphate. The resulting ammonia molecule is channeled to the active site of PdxS. This is Pyridoxal 5'-phosphate synthase subunit PdxT from Saccharolobus islandicus (strain L.S.2.15 / Lassen #1) (Sulfolobus islandicus).